The sequence spans 132 residues: uncharacterized protein (132 aa).

This is an uncharacterized protein from Homo sapiens (Human).